Here is a 349-residue protein sequence, read N- to C-terminus: Peroxidase 22 (349 aa).

Residues M1 to A29 form the signal peptide. At Q30 the chain carries Pyrrolidone carboxylic acid. 4 cysteine pairs are disulfide-bonded: C40/C120, C73/C78, C126/C329, and C206/C238. The Proton acceptor role is filled by H71. Ca(2+) is bound by residues D72, V75, G77, D79, and S81. N-linked (GlcNAc...) asparagine glycosylation is present at N86. Position 168 (P168) interacts with substrate. N-linked (GlcNAc...) asparagine glycosylation is found at N173 and N187. H199 lines the heme b pocket. T200 contributes to the Ca(2+) binding site. Residues N217 and N243 are each glycosylated (N-linked (GlcNAc...) asparagine). Residues D251, T254, and D259 each coordinate Ca(2+).

This sequence belongs to the peroxidase family. Classical plant (class III) peroxidase subfamily. Heme b serves as cofactor. Ca(2+) is required as a cofactor. Mainly expressed in roots.

The protein resides in the secreted. Its subcellular location is the vacuole. The catalysed reaction is 2 a phenolic donor + H2O2 = 2 a phenolic radical donor + 2 H2O. Its function is as follows. Removal of H(2)O(2), oxidation of toxic reductants, biosynthesis and degradation of lignin, suberization, auxin catabolism, response to environmental stresses such as wounding, pathogen attack and oxidative stress. These functions might be dependent on each isozyme/isoform in each plant tissue. This chain is Peroxidase 22 (PER22), found in Arabidopsis thaliana (Mouse-ear cress).